The primary structure comprises 1342 residues: DNA-directed RNA polymerase subunit beta (1342 aa).

It belongs to the RNA polymerase beta chain family. The RNAP catalytic core consists of 2 alpha, 1 beta, 1 beta' and 1 omega subunit. When a sigma factor is associated with the core the holoenzyme is formed, which can initiate transcription.

It catalyses the reaction RNA(n) + a ribonucleoside 5'-triphosphate = RNA(n+1) + diphosphate. Its function is as follows. DNA-dependent RNA polymerase catalyzes the transcription of DNA into RNA using the four ribonucleoside triphosphates as substrates. The protein is DNA-directed RNA polymerase subunit beta of Vibrio campbellii (strain ATCC BAA-1116).